The following is a 91-amino-acid chain: MVFDLLERLFNRNKTGSATVAKDRLKMVLAVDRTEIAPQTIEQIRKEILDVIVRYFEIDENEKFDVTLERERGSTAIIANVPIRRIRPEHI.

This sequence belongs to the MinE family.

In terms of biological role, prevents the cell division inhibition by proteins MinC and MinD at internal division sites while permitting inhibition at polar sites. This ensures cell division at the proper site by restricting the formation of a division septum at the midpoint of the long axis of the cell. In Gloeobacter violaceus (strain ATCC 29082 / PCC 7421), this protein is Cell division topological specificity factor.